Here is a 248-residue protein sequence, read N- to C-terminus: Biosynthetic peptidoglycan transglycosylase (248 aa).

The chain crosses the membrane as a helical span at residues 20-42 (WLRWLMAAPLLFAAASVLQVLIL).

Belongs to the glycosyltransferase 51 family.

Its subcellular location is the cell inner membrane. It catalyses the reaction [GlcNAc-(1-&gt;4)-Mur2Ac(oyl-L-Ala-gamma-D-Glu-L-Lys-D-Ala-D-Ala)](n)-di-trans,octa-cis-undecaprenyl diphosphate + beta-D-GlcNAc-(1-&gt;4)-Mur2Ac(oyl-L-Ala-gamma-D-Glu-L-Lys-D-Ala-D-Ala)-di-trans,octa-cis-undecaprenyl diphosphate = [GlcNAc-(1-&gt;4)-Mur2Ac(oyl-L-Ala-gamma-D-Glu-L-Lys-D-Ala-D-Ala)](n+1)-di-trans,octa-cis-undecaprenyl diphosphate + di-trans,octa-cis-undecaprenyl diphosphate + H(+). It functions in the pathway cell wall biogenesis; peptidoglycan biosynthesis. Peptidoglycan polymerase that catalyzes glycan chain elongation from lipid-linked precursors. This is Biosynthetic peptidoglycan transglycosylase from Xanthomonas euvesicatoria pv. vesicatoria (strain 85-10) (Xanthomonas campestris pv. vesicatoria).